The following is a 1012-amino-acid chain: Probable inorganic carbon transporter subunit DabA (1012 aa).

Positions 489, 491, 679, and 694 each coordinate Zn(2+).

The protein belongs to the inorganic carbon transporter (TC 9.A.2) DabA family. In terms of assembly, forms a complex with DabB. Zn(2+) is required as a cofactor.

It localises to the cell inner membrane. Functionally, part of an energy-coupled inorganic carbon pump. The chain is Probable inorganic carbon transporter subunit DabA from Dechloromonas aromatica (strain RCB).